The primary structure comprises 313 residues: Olfactory receptor 1M1 (313 aa).

Residues 1–25 (MEPRNQTSASQFILLGLSEKPEQET) are Extracellular-facing. A glycan (N-linked (GlcNAc...) asparagine) is linked at asparagine 5. The helical transmembrane segment at 26 to 49 (LLFSLFFCMYLVMVVGNLLIILAI) threads the bilayer. At 50–57 (SIDSHLHT) the chain is on the cytoplasmic side. The helical transmembrane segment at 58–79 (PMYFFLANLSLVDFCLATNTIP) threads the bilayer. Residues 80 to 100 (KMLVSLQTGSKAISYPCCLIQ) are Extracellular-facing. A disulfide bond links cysteine 97 and cysteine 189. A helical transmembrane segment spans residues 101-120 (MYFFHFFGIVDSVIIAMMAY). Residues 121 to 139 (DRFVAICHPLHYAKIMSLR) are Cytoplasmic-facing. A helical transmembrane segment spans residues 140–158 (LCRLLVGALWAFSCFISLT). At 159-196 (HILLMARLVFCGSHEVPHYFCDLTPILRLSCTDTSVNR) the chain is on the extracellular side. A helical membrane pass occupies residues 197-219 (IFILIVAGMVIATPFVCILASYA). Over 220-236 (RILVAIMKVPSAGGRKK) the chain is Cytoplasmic. The helical transmembrane segment at 237–259 (AFSTCSSHLSVVALFYGTTIGVY) threads the bilayer. Over 260–272 (LCPSSVLTTVKEK) the chain is Extracellular. A helical membrane pass occupies residues 273–292 (ASAVMYTAVTPMLNPFIYSL). The Cytoplasmic portion of the chain corresponds to 293–313 (RNRDLKGALRKLVNRKITSSS).

It belongs to the G-protein coupled receptor 1 family.

The protein localises to the cell membrane. Functionally, odorant receptor. The sequence is that of Olfactory receptor 1M1 from Homo sapiens (Human).